Consider the following 626-residue polypeptide: DNA-directed RNA polymerase subunit gamma (626 aa).

Zn(2+) contacts are provided by Cys-71, Cys-73, Cys-86, and Cys-89. Residues Asp-467, Asp-469, and Asp-471 each coordinate Mg(2+).

Belongs to the RNA polymerase beta' chain family. RpoC1 subfamily. In cyanobacteria the RNAP catalytic core is composed of 2 alpha, 1 beta, 1 beta', 1 gamma and 1 omega subunit. When a sigma factor is associated with the core the holoenzyme is formed, which can initiate transcription. It depends on Mg(2+) as a cofactor. Zn(2+) is required as a cofactor.

It carries out the reaction RNA(n) + a ribonucleoside 5'-triphosphate = RNA(n+1) + diphosphate. In terms of biological role, DNA-dependent RNA polymerase catalyzes the transcription of DNA into RNA using the four ribonucleoside triphosphates as substrates. In Microcystis aeruginosa (strain NIES-843 / IAM M-2473), this protein is DNA-directed RNA polymerase subunit gamma.